We begin with the raw amino-acid sequence, 314 residues long: UDP-glucose 4-epimerase (314 aa).

Residues 11 to 12 (FI), 31 to 36 (DNFATG), 56 to 57 (DI), and 77 to 81 (LAAQI) contribute to the NAD(+) site. Substrate is bound by residues S121 and Y146. Positions 146 and 150 each coordinate NAD(+). Y146 (proton acceptor) is an active-site residue. Substrate contacts are provided by residues N175, 189-190 (VV), 204-206 (RVF), R213, and 271-274 (RLGD).

It belongs to the NAD(P)-dependent epimerase/dehydratase family. In terms of assembly, homodimer. It depends on NAD(+) as a cofactor.

It catalyses the reaction UDP-alpha-D-glucose = UDP-alpha-D-galactose. The protein operates within carbohydrate metabolism; galactose metabolism. Its function is as follows. Involved in the metabolism of galactose. Catalyzes the conversion of UDP-galactose (UDP-Gal) to UDP-glucose (UDP-Glc) through a mechanism involving the transient reduction of NAD. The polypeptide is UDP-glucose 4-epimerase (galE1) (Mycobacterium tuberculosis (strain CDC 1551 / Oshkosh)).